Reading from the N-terminus, the 446-residue chain is Deoxyguanosinetriphosphate triphosphohydrolase-like protein (446 aa).

A disordered region spans residues M1–D28. A compositionally biased stretch (basic and acidic residues) spans Q7–D28. Residues R59 to A252 form the HD domain.

Belongs to the dGTPase family. Type 2 subfamily.

In Shewanella sp. (strain MR-4), this protein is Deoxyguanosinetriphosphate triphosphohydrolase-like protein.